The following is a 158-amino-acid chain: 2-C-methyl-D-erythritol 2,4-cyclodiphosphate synthase (158 aa).

Residues aspartate 9 and histidine 11 each coordinate a divalent metal cation. 4-CDP-2-C-methyl-D-erythritol 2-phosphate-binding positions include 9 to 11 and 35 to 36; these read DVH and HS. Histidine 43 provides a ligand contact to a divalent metal cation. Residues 57-59, 62-66, 133-136, phenylalanine 140, and arginine 143 contribute to the 4-CDP-2-C-methyl-D-erythritol 2-phosphate site; these read DIG, FPDTD, and TTTE.

The protein belongs to the IspF family. Homotrimer. A divalent metal cation serves as cofactor.

It catalyses the reaction 4-CDP-2-C-methyl-D-erythritol 2-phosphate = 2-C-methyl-D-erythritol 2,4-cyclic diphosphate + CMP. It functions in the pathway isoprenoid biosynthesis; isopentenyl diphosphate biosynthesis via DXP pathway; isopentenyl diphosphate from 1-deoxy-D-xylulose 5-phosphate: step 4/6. In terms of biological role, involved in the biosynthesis of isopentenyl diphosphate (IPP) and dimethylallyl diphosphate (DMAPP), two major building blocks of isoprenoid compounds. Catalyzes the conversion of 4-diphosphocytidyl-2-C-methyl-D-erythritol 2-phosphate (CDP-ME2P) to 2-C-methyl-D-erythritol 2,4-cyclodiphosphate (ME-CPP) with a corresponding release of cytidine 5-monophosphate (CMP). This Geobacillus kaustophilus (strain HTA426) protein is 2-C-methyl-D-erythritol 2,4-cyclodiphosphate synthase.